An 84-amino-acid chain; its full sequence is Small ribosomal subunit protein bS20 (84 aa).

Residues 1–25 (MANIVSNEKTYRHTQKVRKENHAKM) are disordered.

The protein belongs to the bacterial ribosomal protein bS20 family.

Binds directly to 16S ribosomal RNA. In Ureaplasma urealyticum serovar 10 (strain ATCC 33699 / Western), this protein is Small ribosomal subunit protein bS20.